Reading from the N-terminus, the 522-residue chain is Cytochrome P450 4F4 (522 aa).

2 helical membrane passes run 15–35 (TSLP…VRVL) and 87–107 (GFMT…PDVI). Heme is bound by residues E328 and C468.

This sequence belongs to the cytochrome P450 family. Heme serves as cofactor. As to expression, expressed in hepatocytes. High expression in liver and kidney. Lower expression in brain.

Its subcellular location is the endoplasmic reticulum membrane. The protein localises to the microsome membrane. The catalysed reaction is (5Z,8Z,11Z,14Z)-eicosatetraenoate + reduced [NADPH--hemoprotein reductase] + O2 = 20-hydroxy-(5Z,8Z,11Z,14Z)-eicosatetraenoate + oxidized [NADPH--hemoprotein reductase] + H2O + H(+). The enzyme catalyses leukotriene B4 + reduced [NADPH--hemoprotein reductase] + O2 = 20-hydroxy-leukotriene B4 + oxidized [NADPH--hemoprotein reductase] + H2O + H(+). It carries out the reaction 6-trans-leukotriene B4 + reduced [NADPH--hemoprotein reductase] + O2 = 20-hydroxy-6-trans-leukotriene B4 + oxidized [NADPH--hemoprotein reductase] + H2O + H(+). It catalyses the reaction prostaglandin A1 + reduced [NADPH--hemoprotein reductase] + O2 = 20-hydroxy prostaglandin A1 + oxidized [NADPH--hemoprotein reductase] + H2O + H(+). The catalysed reaction is prostaglandin E1 + reduced [NADPH--hemoprotein reductase] + O2 = 20-hydroxy prostaglandin E1 + oxidized [NADPH--hemoprotein reductase] + H2O + H(+). Its function is as follows. A cytochrome P450 monooxygenase involved in the metabolism of arachidonic acid and its oxygenated derivatives. Mechanistically, uses molecular oxygen inserting one oxygen atom into a substrate, and reducing the second into a water molecule, with two electrons provided by NADPH via cytochrome P450 reductase (CPR; NADPH-ferrihemoprotein reductase). Participates in the conversion of arachidonic acid to omega-hydroxyeicosatetraenoic acid (20-HETE), a signaling molecule acting both as vasoconstrictive and natriuretic with overall effect on arterial blood pressure. Hydroxylates the terminal carbon (omega-hydroxylation) of inflammatory lipid mediators, including prostaglandin (PG) A1, PGE1 and leukotriene B4 (LTB4), and may play a role in inactivation of these oxylipins during the resolution of inflammation. The polypeptide is Cytochrome P450 4F4 (Rattus norvegicus (Rat)).